Consider the following 148-residue polypeptide: Lysozyme C (148 aa).

A signal peptide spans 1–18; it reads MKVLVILGLVLLSVMVQG. In terms of domain architecture, C-type lysozyme spans 19 to 148; sequence KVFERCELAR…VSQYVQGCGV (130 aa). 4 disulfides stabilise this stretch: Cys24–Cys146, Cys48–Cys134, Cys83–Cys99, and Cys95–Cys113. Catalysis depends on residues Glu53 and Asp71.

Belongs to the glycosyl hydrolase 22 family. In terms of assembly, monomer.

It is found in the secreted. The catalysed reaction is Hydrolysis of (1-&gt;4)-beta-linkages between N-acetylmuramic acid and N-acetyl-D-glucosamine residues in a peptidoglycan and between N-acetyl-D-glucosamine residues in chitodextrins.. Lysozymes have primarily a bacteriolytic function; those in tissues and body fluids are associated with the monocyte-macrophage system and enhance the activity of immunoagents. This is Lysozyme C (LYZ) from Saimiri sciureus (Common squirrel monkey).